A 468-amino-acid chain; its full sequence is Soluble pyridine nucleotide transhydrogenase (468 aa).

E36 to C45 contributes to the FAD binding site.

Belongs to the class-I pyridine nucleotide-disulfide oxidoreductase family. FAD is required as a cofactor.

Its subcellular location is the cytoplasm. The catalysed reaction is NAD(+) + NADPH = NADH + NADP(+). Its function is as follows. Conversion of NADPH, generated by peripheral catabolic pathways, to NADH, which can enter the respiratory chain for energy generation. The protein is Soluble pyridine nucleotide transhydrogenase of Hamiltonella defensa subsp. Acyrthosiphon pisum (strain 5AT).